We begin with the raw amino-acid sequence, 466 residues long: ATP synthase subunit beta (466 aa).

Residue 156–163 (GGAGVGKT) coordinates ATP.

Belongs to the ATPase alpha/beta chains family. As to quaternary structure, F-type ATPases have 2 components, CF(1) - the catalytic core - and CF(0) - the membrane proton channel. CF(1) has five subunits: alpha(3), beta(3), gamma(1), delta(1), epsilon(1). CF(0) has three main subunits: a(1), b(2) and c(9-12). The alpha and beta chains form an alternating ring which encloses part of the gamma chain. CF(1) is attached to CF(0) by a central stalk formed by the gamma and epsilon chains, while a peripheral stalk is formed by the delta and b chains.

Its subcellular location is the cell membrane. The catalysed reaction is ATP + H2O + 4 H(+)(in) = ADP + phosphate + 5 H(+)(out). In terms of biological role, produces ATP from ADP in the presence of a proton gradient across the membrane. The catalytic sites are hosted primarily by the beta subunits. The sequence is that of ATP synthase subunit beta from Buchnera aphidicola subsp. Schizaphis graminum (strain Sg).